The sequence spans 299 residues: Ribosomal RNA small subunit methyltransferase H (299 aa).

S-adenosyl-L-methionine contacts are provided by residues 36–38, Asp55, Tyr82, Asp103, and Gln110; that span reads GGH. 2 stretches are compositionally biased toward basic and acidic residues: residues 269–282 and 289–299; these read PVRPSEEEIRENPR and RAAERIEEGGD. The tract at residues 269–299 is disordered; the sequence is PVRPSEEEIRENPRARSGRLRAAERIEEGGD.

It belongs to the methyltransferase superfamily. RsmH family.

It is found in the cytoplasm. The catalysed reaction is cytidine(1402) in 16S rRNA + S-adenosyl-L-methionine = N(4)-methylcytidine(1402) in 16S rRNA + S-adenosyl-L-homocysteine + H(+). In terms of biological role, specifically methylates the N4 position of cytidine in position 1402 (C1402) of 16S rRNA. The sequence is that of Ribosomal RNA small subunit methyltransferase H from Thermotoga maritima (strain ATCC 43589 / DSM 3109 / JCM 10099 / NBRC 100826 / MSB8).